The chain runs to 581 residues: Pyridine nucleotide-disulfide oxidoreductase domain-containing protein 2 (581 aa).

38–71 (VVIGAGHNGLVVAAYLQRLGVNTAVFERRHVIGG) is an FAD binding site.

It belongs to the carotenoid/retinoid oxidoreductase family. As to quaternary structure, interacts with COX5B; this interaction may contribute to localize PYROXD2 to the inner face of the inner mitochondrial membrane.

Its subcellular location is the mitochondrion matrix. In terms of biological role, probable oxidoreductase that may play a role as regulator of mitochondrial function. In Pongo abelii (Sumatran orangutan), this protein is Pyridine nucleotide-disulfide oxidoreductase domain-containing protein 2.